The sequence spans 146 residues: Suppressor APC domain-containing protein 1 (146 aa).

A disordered region spans residues 121 to 146 (HRKGVTQSTGEVVSQAPPGPKGPTLV). Positions 137–146 (PPGPKGPTLV) are enriched in pro residues.

The sequence is that of Suppressor APC domain-containing protein 1 (Sapcd1) from Mus musculus (Mouse).